A 163-amino-acid polypeptide reads, in one-letter code: Putative phosphinothricin acetyltransferase YwnH (163 aa).

The 158-residue stretch at 1 to 158 (MTLRLAEHRD…DGKRYDLKIL (158 aa)) folds into the N-acetyltransferase domain. Residues 85 to 87 (IYI), 94 to 98 (KGVGS), and 124 to 126 (NKP) each bind acetyl-CoA.

It belongs to the acetyltransferase family. PAT/BAR subfamily.

It catalyses the reaction phosphinothricin + acetyl-CoA = N-acetylphosphinothricin + CoA + H(+). In terms of biological role, this enzyme is an effector of phosphinothricin tripeptide (PTT or bialaphos) resistance. Inactivates PTT by transfer of an acetyl group. The protein is Putative phosphinothricin acetyltransferase YwnH (ywnH) of Bacillus subtilis (strain 168).